Reading from the N-terminus, the 83-residue chain is Kappa-actitoxin-Aer3a (83 aa).

An N-terminal signal peptide occupies residues 1-22; it reads MKGQMIICLVLIALCMSVVVMA. Positions 23 to 49 are excised as a propeptide; it reads QNLRAEELEKANPKDERVRSFERNQKR. The ShKT domain occupies 51-83; that stretch reads CKDYLPKSECTQFRCRTSMKYKYTNCKKTCGTC. Disulfide bonds link Cys-51-Cys-83, Cys-60-Cys-76, and Cys-65-Cys-80.

Belongs to the sea anemone type 1 potassium channel toxin family. Type 1a subfamily.

The protein resides in the secreted. It is found in the nematocyst. Its function is as follows. Specifically, dose-dependently and potently blocks the voltage-gated potassium channel Kv1.1/KCNA1 (Ki=1.6 pM). Moderately blocks potassium channel heterotetramers formed by 3 subunits of Kv1.1/KCNA1 and 1 subunit of Kv1.2/KCNA2 (Ki=56 nM) and weakly blocks those formed by 2 subunits of Kv1.1/KCNA1 and 2 subunits of Kv1.2/KCNA2 (Ki=14 nM). This is Kappa-actitoxin-Aer3a from Anemonia erythraea (Sea anemone).